We begin with the raw amino-acid sequence, 547 residues long: Large cysteine-rich periplasmic protein OmcB (547 aa).

The first 22 residues, 1 to 22 (MNKLIRRAVTIFAVTSVASLFA), serve as a signal peptide directing secretion. A propeptide spanning residues 23–40 (SGVLETSMAESLSTNVIS) is cleaved from the precursor. A disordered region spans residues 45-84 (KAKDNTSHKSKKARKNHSKETPVDRKEVAPVHESKATGPK). Over residues 52 to 61 (HKSKKARKNH) the composition is skewed to basic residues. A compositionally biased stretch (basic and acidic residues) spans 62 to 79 (SKETPVDRKEVAPVHESK).

In terms of assembly, part of a disulfide cross-linked outer membrane complex (COMC) composed of the major outer membrane porin (MOMP), the small cysteine-rich protein (OmcA) and the large cysteine-rich periplasmic protein (OmcB).

It localises to the periplasm. In terms of biological role, in elementary bodies (EBs, the infectious stage, which is able to survive outside the host cell) provides the structural integrity of the outer envelope through disulfide cross-links with the small cysteine-rich protein and the major outer membrane protein. It has been described in publications as the Sarkosyl-insoluble COMC (Chlamydia outer membrane complex), and serves as the functional equivalent of peptidoglycan. The sequence is that of Large cysteine-rich periplasmic protein OmcB (omcB) from Chlamydia trachomatis serovar D (strain ATCC VR-885 / DSM 19411 / UW-3/Cx).